Reading from the N-terminus, the 360-residue chain is MTATLERRQSVSLWERFCGWITSTENRLYIGWFGCLMFPTLLTATSCYIIAFIAAPPVDIDGIREPVAGSLLYGNNIITGAVIPSSNAIGIHFYPIWEAASVDEWLYNGGPYQLIVLHFLLGVASYMGREWELSYRLGMRPWIFVAFSAPVAAASAVFLVYPIGQGSFSDGMPLGISGTFNFMLVFQAEHNILMHPFHMAGVAGVFGGSLFSAMHGSLVTSSLIRETTENESTNYGYKFGQEEETYNIVAAHGYFGRLIFQYASFNNSRALHFFLALWPVVGIWLTAMGVSTMAFNLNGFNFNQSVVDSQGRVINTWADIINRADLGMEVMHERNAHNFPLDLASGEVLPVALTAPAVNG.

The next 3 membrane-spanning stretches (helical) occupy residues 29 to 46 (YIGW…TATS), 118 to 133 (HFLL…EWEL), and 142 to 156 (WIFV…AASA). His118 contacts chlorophyll a. Pheophytin a is bound at residue Tyr126. Positions 170 and 189 each coordinate [CaMn4O5] cluster. Residues 197-218 (FHMAGVAGVFGGSLFSAMHGSL) traverse the membrane as a helical segment. His198 serves as a coordination point for chlorophyll a. A quinone contacts are provided by residues His215 and 264–265 (SF). His215 lines the Fe cation pocket. His272 contributes to the Fe cation binding site. The chain crosses the membrane as a helical span at residues 274 to 288 (FLALWPVVGIWLTAM). Residues His332, Glu333, Asp342, and Ala344 each contribute to the [CaMn4O5] cluster site. Positions 345–360 (SGEVLPVALTAPAVNG) are excised as a propeptide.

This sequence belongs to the reaction center PufL/M/PsbA/D family. In terms of assembly, PSII is composed of 1 copy each of membrane proteins PsbA, PsbB, PsbC, PsbD, PsbE, PsbF, PsbH, PsbI, PsbJ, PsbK, PsbL, PsbM, PsbT, PsbX, PsbY, PsbZ, Psb30/Ycf12, at least 3 peripheral proteins of the oxygen-evolving complex and a large number of cofactors. It forms dimeric complexes. Requires The D1/D2 heterodimer binds P680, chlorophylls that are the primary electron donor of PSII, and subsequent electron acceptors. It shares a non-heme iron and each subunit binds pheophytin, quinone, additional chlorophylls, carotenoids and lipids. D1 provides most of the ligands for the Mn4-Ca-O5 cluster of the oxygen-evolving complex (OEC). There is also a Cl(-1) ion associated with D1 and D2, which is required for oxygen evolution. The PSII complex binds additional chlorophylls, carotenoids and specific lipids. as cofactor. Tyr-161 forms a radical intermediate that is referred to as redox-active TyrZ, YZ or Y-Z. Post-translationally, C-terminally processed by CTPA; processing is essential to allow assembly of the oxygen-evolving complex and thus photosynthetic growth.

Its subcellular location is the plastid. The protein localises to the chloroplast thylakoid membrane. The catalysed reaction is 2 a plastoquinone + 4 hnu + 2 H2O = 2 a plastoquinol + O2. Its function is as follows. Photosystem II (PSII) is a light-driven water:plastoquinone oxidoreductase that uses light energy to abstract electrons from H(2)O, generating O(2) and a proton gradient subsequently used for ATP formation. It consists of a core antenna complex that captures photons, and an electron transfer chain that converts photonic excitation into a charge separation. The D1/D2 (PsbA/PsbD) reaction center heterodimer binds P680, the primary electron donor of PSII as well as several subsequent electron acceptors. This chain is Photosystem II protein D1, found in Phaeodactylum tricornutum (strain CCAP 1055/1).